Reading from the N-terminus, the 376-residue chain is Thiol-disulfide oxidoreductase LTO1 (376 aa).

The transit peptide at 1-45 directs the protein to the chloroplast; sequence MMARFVSVSSCQFHFGFREVSPPSVTSYPRRFEVSDRRFPAIPIK. A disordered region spans residues 44 to 77; it reads IKCSSSEPENGEDSAPSLSSSSSSSTSEVSTSNS. Topologically, residues 46–81 are stromal; it reads CSSSEPENGEDSAPSLSSSSSSSTSEVSTSNSSTYN. The segment covering 57 to 77 has biased composition (low complexity); the sequence is SAPSLSSSSSSSTSEVSTSNS. Residues 82-102 traverse the membrane as a helical segment; it reads WYTGIGGIGMLDTAYLTYLKV. Residues 103–125 lie on the Lumenal side of the membrane; the sequence is TGSDAFCPIGGGTCGDVLNSDYA. Cys109 and Cys116 are joined by a disulfide. The helical transmembrane segment at 126-146 threads the bilayer; it reads VVFGVPLPVIGFVMYGVVTAL. Topologically, residues 147 to 165 are stromal; it reads SAELGEGNLPFGISKSNGR. The helical transmembrane segment at 166–186 threads the bilayer; it reads FALFGITTAMASASAYFLYIL. Residues 187-192 are Lumenal-facing; it reads STKLSG. A helical membrane pass occupies residues 193-213; sequence SSCLYCLVSAFLSFSLFFLSV. Cys195 and Cys198 are oxidised to a cystine. Topologically, residues 214–223 are stromal; the sequence is KDVKLQEIQQ. A helical transmembrane segment spans residues 224–244; the sequence is VVGLQICLAIIVVASLTASYS. Residues 245–376 lie on the Lumenal side of the membrane; it reads TAQPIPSRSG…DQANETNQLQ (132 aa). 2 cysteine pairs are disulfide-bonded: Cys293–Cys296 and Cys316–Cys331.

The protein belongs to the VKOR family. Interacts with the PSII subunits PSBO1 and PSBO2. Interacts with TL17, TL20.3, HCF164, PETJ, VDE1, EDA3, FKBP13 and FKBP20-2. Expressed in cotyledons, rosette leaves, stems, cauline leaves and flowers.

The protein resides in the plastid. The protein localises to the chloroplast thylakoid membrane. In terms of biological role, thiol-disulfide oxidoreductase catalyzing disulfide bond formation of chloroplast proteins and involved in redox regulation and photosynthetic electron transport. Required for the assembly of photosystem II (PSII) through the formation of disulfide bond in PSBO, a subunit of the PSII oxygen-evolving complex in the thylakoid lumen. Involved in the formation of disulfide bonds in the lumenal protein FKBP13. In vitro, reduces phylloquinone (vitamin K1) and menaquinone (vitamin K2) to their respective quinol. Cannot reduce phylloquinone epoxide to phylloquinone. Plays an important role in regulating the thylakoid lumen redox. In Arabidopsis thaliana (Mouse-ear cress), this protein is Thiol-disulfide oxidoreductase LTO1.